Here is a 514-residue protein sequence, read N- to C-terminus: ATP synthase subunit alpha (514 aa).

170-177 is a binding site for ATP; that stretch reads GDRQTGKT.

It belongs to the ATPase alpha/beta chains family. As to quaternary structure, F-type ATPases have 2 components, CF(1) - the catalytic core - and CF(0) - the membrane proton channel. CF(1) has five subunits: alpha(3), beta(3), gamma(1), delta(1), epsilon(1). CF(0) has three main subunits: a(1), b(2) and c(9-12). The alpha and beta chains form an alternating ring which encloses part of the gamma chain. CF(1) is attached to CF(0) by a central stalk formed by the gamma and epsilon chains, while a peripheral stalk is formed by the delta and b chains.

The protein localises to the cell inner membrane. It carries out the reaction ATP + H2O + 4 H(+)(in) = ADP + phosphate + 5 H(+)(out). Its function is as follows. Produces ATP from ADP in the presence of a proton gradient across the membrane. The alpha chain is a regulatory subunit. The polypeptide is ATP synthase subunit alpha (Acidithiobacillus ferrooxidans (strain ATCC 23270 / DSM 14882 / CIP 104768 / NCIMB 8455) (Ferrobacillus ferrooxidans (strain ATCC 23270))).